Reading from the N-terminus, the 159-residue chain is Large ribosomal subunit protein uL30 (159 aa).

The protein belongs to the universal ribosomal protein uL30 family. Part of the 50S ribosomal subunit.

The polypeptide is Large ribosomal subunit protein uL30 (Ignicoccus hospitalis (strain KIN4/I / DSM 18386 / JCM 14125)).